The primary structure comprises 326 residues: Transmembrane protein 255B (326 aa).

4 helical membrane passes run 26 to 46, 55 to 75, 85 to 105, and 200 to 220; these read LWFV…GLAA, VGGY…IIGI, LVAA…CAIV, and AVLN…LGAF. Positions 284–326 are disordered; that stretch reads LASSEDLQPPSPSSSGSGLPGQAPPCYAPTYFPPGEKPPPYAP. Residues 305-326 are compositionally biased toward pro residues; sequence QAPPCYAPTYFPPGEKPPPYAP.

This sequence belongs to the TMEM255 family.

It localises to the membrane. The polypeptide is Transmembrane protein 255B (TMEM255B) (Homo sapiens (Human)).